The primary structure comprises 95 residues: Large ribosomal subunit protein uL23 (95 aa).

This sequence belongs to the universal ribosomal protein uL23 family. In terms of assembly, part of the 50S ribosomal subunit. Contacts protein L29, and trigger factor when it is bound to the ribosome.

One of the early assembly proteins it binds 23S rRNA. One of the proteins that surrounds the polypeptide exit tunnel on the outside of the ribosome. Forms the main docking site for trigger factor binding to the ribosome. In Leuconostoc mesenteroides subsp. mesenteroides (strain ATCC 8293 / DSM 20343 / BCRC 11652 / CCM 1803 / JCM 6124 / NCDO 523 / NBRC 100496 / NCIMB 8023 / NCTC 12954 / NRRL B-1118 / 37Y), this protein is Large ribosomal subunit protein uL23.